The primary structure comprises 196 residues: MILSFKKLYLTFARSSRIIITLVIIDQLTKWWFINNLRWKPGLTLKVTSFLNMVYTWNYGISFGLMRDYYQYSNIVFLITNTIIVCYLYYLMMSSKTIGGFAGYSFVIGGAIGNLIDRSFRGAVFDFIHFYYQDYSFPVFNLADCFITLGVIILVEDYYSAKKNIEEKAKENYDKAQIEAMAEKIRNAPQGDNDKI.

2 helical membrane passes run 75–95 and 97–117; these read IVFL…MMSS and TIGG…NLID. Residues Asp-126 and Asp-144 contribute to the active site. A helical membrane pass occupies residues 135–155; the sequence is YSFPVFNLADCFITLGVIILV.

This sequence belongs to the peptidase A8 family.

It is found in the cell inner membrane. It catalyses the reaction Release of signal peptides from bacterial membrane prolipoproteins. Hydrolyzes -Xaa-Yaa-Zaa-|-(S,diacylglyceryl)Cys-, in which Xaa is hydrophobic (preferably Leu), and Yaa (Ala or Ser) and Zaa (Gly or Ala) have small, neutral side chains.. It functions in the pathway protein modification; lipoprotein biosynthesis (signal peptide cleavage). This protein specifically catalyzes the removal of signal peptides from prolipoproteins. This is Lipoprotein signal peptidase from Rickettsia bellii (strain OSU 85-389).